Here is a 199-residue protein sequence, read N- to C-terminus: MANRGPSYGLSREVQEKIEQKYDADLENKLVDWIILQCAEDIEHPPPGRAHFQKWLMDGTVLCKLINSLYPPGQEPIPKISESKMAFKQMEQISQFLKAAETYGVRTTDIFQTVDLWEGKDMAAVQRTLMALGSVAVTKDDGCYRGEPSWFHRKAQQNRRGFSEEQLRQGQNVIGLQMGSNKGASQAGMTGYGMPRQIM.

Residues 24 to 136 enclose the Calponin-homology (CH) domain; that stretch reads ADLENKLVDW…RTLMALGSVA (113 aa). Phosphoserine is present on Ser-163. One copy of the Calponin-like repeat lies at 174–199; sequence IGLQMGSNKGASQAGMTGYGMPRQIM. The span at 176-188 shows a compositional bias: polar residues; sequence LQMGSNKGASQAG. Residues 176-199 are disordered; the sequence is LQMGSNKGASQAGMTGYGMPRQIM.

This sequence belongs to the calponin family. Widely expressed in the brain. Expression is increased in the superior frontal cortex of alcoholics, but not in the motor cortex or cerebellum.

The polypeptide is Transgelin-3 (TAGLN3) (Homo sapiens (Human)).